The following is a 295-amino-acid chain: UTP--glucose-1-phosphate uridylyltransferase (295 aa).

This sequence belongs to the UDPGP type 2 family.

The catalysed reaction is alpha-D-glucose 1-phosphate + UTP + H(+) = UDP-alpha-D-glucose + diphosphate. May play a role in stationary phase survival. The protein is UTP--glucose-1-phosphate uridylyltransferase (galU) of Haemophilus ducreyi (strain 35000HP / ATCC 700724).